Consider the following 471-residue polypeptide: DENN domain-containing protein 2D (471 aa).

A uDENN domain is found at 55–204 (EYLLVVSLKK…AFPAPGKTVT (150 aa)). Residues 226–359 (HLEHVDFSSL…LQDDILDSLG (134 aa)) enclose the cDENN domain. In terms of domain architecture, dDENN spans 361–445 (GINELKTAEQ…QEAEKSKNPP (85 aa)).

In terms of tissue distribution, in bronchial mucosa, mainly expressed in ciliated and basal epithelial cells and weakly in alveolar cells (at protein level). Tends to be down-regulated in lung cancers, immortalized bronchial epithelial cell lines and precancerous lesions.

It localises to the cytoplasm. Guanine nucleotide exchange factor (GEF) which may activate RAB9A and RAB9B. Promotes the exchange of GDP to GTP, converting inactive GDP-bound Rab proteins into their active GTP-bound form. The polypeptide is DENN domain-containing protein 2D (DENND2D) (Homo sapiens (Human)).